We begin with the raw amino-acid sequence, 389 residues long: COP9 signalosome complex subunit 11 (389 aa).

The region spanning 143 to 312 (QLIIDIPNLV…ILYQKFDPQM (170 aa)) is the PCI domain.

As to quaternary structure, component of a COP9 signalosome-like (CSN) complex.

Its subcellular location is the cytoplasm. The protein resides in the nucleus. Component of the COP9 signalosome (CSN) complex that acts as an regulator of the ubiquitin (Ubl) conjugation pathway by mediating the deneddylation of the cullin subunit of SCF-type E3 ubiquitin-protein ligase complexes The CSN complex is involved in the regulation of the mating pheromone response. PCI8 may also be involved in transcriptional and translational control. The protein is COP9 signalosome complex subunit 11 (PCI8) of Kluyveromyces lactis (strain ATCC 8585 / CBS 2359 / DSM 70799 / NBRC 1267 / NRRL Y-1140 / WM37) (Yeast).